A 382-amino-acid polypeptide reads, in one-letter code: 3-hydroxyisobutyryl-CoA hydrolase, mitochondrial (382 aa).

Substrate contacts are provided by glutamate 117, glycine 142, glutamate 165, and aspartate 173.

Belongs to the enoyl-CoA hydratase/isomerase family.

The protein localises to the mitochondrion. It catalyses the reaction 3-hydroxy-2-methylpropanoyl-CoA + H2O = 3-hydroxy-2-methylpropanoate + CoA + H(+). It participates in amino-acid degradation; L-valine degradation. Hydrolyzes 3-hydroxyisobutyryl-CoA (HIBYL-CoA), a saline catabolite. Has high activity toward isobutyryl-CoA. Could be an isobutyryl-CoA dehydrogenase that functions in valine catabolism. Also hydrolyzes 3-hydroxypropanoyl-CoA. This Danio rerio (Zebrafish) protein is 3-hydroxyisobutyryl-CoA hydrolase, mitochondrial (hibch).